The following is an 874-amino-acid chain: Endothelial PAS domain-containing protein 1 (874 aa).

The disordered stretch occupies residues 1–23; it reads MTADKEKKRSSSELRKEKSRDAA. Residues 14–67 enclose the bHLH domain; sequence LRKEKSRDAARCRRSKETEVFYELAHELPLPHSVSSHLDKASIMRLAISFLRTH. Positions 26 to 53 are DNA-binding; sequence RRSKETEVFYELAHELPLPHSVSSHLDK. Residues 84–154 form the PAS 1 domain; it reads DQQMDNLYLK…ENLTLKNGSG (71 aa). A required for heterodimer formation with ARNT region spans residues 171 to 192; sequence RMKCTVTNRGRTVNLKSATWKV. A PAS 2 domain is found at 230-300; it reads QHPSHMDIPL…KSHQNLCTKG (71 aa). The 44-residue stretch at 304–347 folds into the PAC domain; that stretch reads SGQYRMLAKHGGYVWLETQGTVIYNPRNLQPQCIMCVNYVLSEI. The residue at position 405 (Pro405) is a 4-hydroxyproline. Positions 438–489 are disordered; the sequence is WVSGLRSHSAQSESGSLPAFTVPQADTPGNTTPSASSSSSCSTPSSPEDYYS. Residues 443-452 show a composition bias toward polar residues; that stretch reads RSHSAQSESG. Residues 464 to 484 are compositionally biased toward low complexity; sequence TPGNTTPSASSSSSCSTPSSP. The segment at 495–541 is NTAD; it reads LKIEVIEKLFAMDTEPRDPGSTQTDFSELDLETLAPYIPMDGEDFQL. Position 530 is a 4-hydroxyproline (Pro530). Residues 777 to 803 form a disordered region; that stretch reads LGQPLRHLPPPQPPSTRSSGENAKTGF. Residues 834-874 form a CTAD region; sequence SFEPYLLPELTRYDCEVNVPVPGSSTLLQGRDLLRALDQAT. Thr844 carries the post-translational modification Phosphothreonine. Asn851 is subject to (3S)-3-hydroxyasparagine.

In terms of assembly, interacts with HIF3A isoform 2. Efficient DNA binding requires dimerization with another bHLH protein. Heterodimerizes with ARNT; heterodimer binds to core DNA sequence 5'-TACGTG-3' within the hypoxia response element (HRE) of target gene promoters. Interacts with CREBBP. Interacts with EGLN1. Interacts with VHL. Post-translationally, in normoxia, is probably hydroxylated on Pro-405 and Pro-530 by EGLN1/PHD1, EGLN2/PHD2 and/or EGLN3/PHD3. The hydroxylated prolines promote interaction with VHL, initiating rapid ubiquitination and subsequent proteasomal degradation. Under hypoxia, proline hydroxylation is impaired and ubiquitination is attenuated, resulting in stabilization. In normoxia, is hydroxylated on Asn-851 by HIF1AN thus probably abrogating interaction with CREBBP and EP300 and preventing transcriptional activation. In terms of processing, phosphorylated on multiple sites in the CTAD. Post-translationally, the iron and 2-oxoglutarate dependent 3-hydroxylation of asparagine is (S) stereospecific within HIF CTAD domains. As to expression, expressed in most tissues, with highest levels in lung, followed by heart, kidney, brain and liver. Predominantly expressed in endothelial cells. Also found in smooth muscle cells of the uterus, neurons, and brown adipose tissue. High expression in embryonic choroid plexus and kidney glomeruli.

The protein resides in the nucleus. It is found in the nucleus speckle. Transcription factor involved in the induction of oxygen regulated genes. Heterodimerizes with ARNT; heterodimer binds to core DNA sequence 5'-TACGTG-3' within the hypoxia response element (HRE) of target gene promoters. Regulates the vascular endothelial growth factor (VEGF) expression and seems to be implicated in the development of blood vessels and the tubular system of lung. May also play a role in the formation of the endothelium that gives rise to the blood brain barrier. Potent activator of the Tie-2 tyrosine kinase expression. Activation requires recruitment of transcriptional coactivators such as CREBBP and probably EP300. Interaction with redox regulatory protein APEX seems to activate CTAD. This is Endothelial PAS domain-containing protein 1 (Epas1) from Mus musculus (Mouse).